Here is a 95-residue protein sequence, read N- to C-terminus: Co-chaperonin GroES (95 aa).

It belongs to the GroES chaperonin family. Heptamer of 7 subunits arranged in a ring. Interacts with the chaperonin GroEL.

The protein resides in the cytoplasm. Together with the chaperonin GroEL, plays an essential role in assisting protein folding. The GroEL-GroES system forms a nano-cage that allows encapsulation of the non-native substrate proteins and provides a physical environment optimized to promote and accelerate protein folding. GroES binds to the apical surface of the GroEL ring, thereby capping the opening of the GroEL channel. The protein is Co-chaperonin GroES of Chlorobium phaeovibrioides (strain DSM 265 / 1930) (Prosthecochloris vibrioformis (strain DSM 265)).